The primary structure comprises 591 residues: Aspartate--tRNA ligase (591 aa).

Residue glutamate 173 participates in L-aspartate binding. Residues 197–200 form an aspartate region; sequence QLFK. Position 219 (arginine 219) interacts with L-aspartate. ATP is bound by residues 219–221 and glutamine 228; that span reads RDE. L-aspartate is bound at residue histidine 448. Residue glutamate 482 coordinates ATP. L-aspartate is bound at residue arginine 489. 534–537 is an ATP binding site; sequence GLDR.

It belongs to the class-II aminoacyl-tRNA synthetase family. Type 1 subfamily. Homodimer.

Its subcellular location is the cytoplasm. The catalysed reaction is tRNA(Asp) + L-aspartate + ATP = L-aspartyl-tRNA(Asp) + AMP + diphosphate. In terms of biological role, catalyzes the attachment of L-aspartate to tRNA(Asp) in a two-step reaction: L-aspartate is first activated by ATP to form Asp-AMP and then transferred to the acceptor end of tRNA(Asp). This chain is Aspartate--tRNA ligase, found in Shewanella frigidimarina (strain NCIMB 400).